The chain runs to 289 residues: Phenylalanine-4-hydroxylase (289 aa).

Histidine 144, histidine 149, and glutamate 189 together coordinate Fe cation.

The protein belongs to the biopterin-dependent aromatic amino acid hydroxylase family. The cofactor is Fe(2+).

The catalysed reaction is (6R)-L-erythro-5,6,7,8-tetrahydrobiopterin + L-phenylalanine + O2 = (4aS,6R)-4a-hydroxy-L-erythro-5,6,7,8-tetrahydrobiopterin + L-tyrosine. It functions in the pathway amino-acid degradation; L-phenylalanine degradation; acetoacetate and fumarate from L-phenylalanine: step 1/6. This is Phenylalanine-4-hydroxylase (phhA) from Vibrio cholerae serotype O1 (strain ATCC 39315 / El Tor Inaba N16961).